A 211-amino-acid chain; its full sequence is Pyridoxine/pyridoxamine 5'-phosphate oxidase (211 aa).

Substrate is bound by residues 7–10 (RREY) and Lys-65. FMN is bound by residues 60–65 (RIVLLK), 75–76 (YT), Arg-81, Lys-82, and Gln-104. 3 residues coordinate substrate: Tyr-122, Arg-126, and Ser-130. FMN-binding positions include 139–140 (QS) and Trp-184. 190–192 (RLH) contributes to the substrate binding site. Arg-194 is a binding site for FMN.

The protein belongs to the pyridoxamine 5'-phosphate oxidase family. In terms of assembly, homodimer. FMN serves as cofactor.

It carries out the reaction pyridoxamine 5'-phosphate + O2 + H2O = pyridoxal 5'-phosphate + H2O2 + NH4(+). It catalyses the reaction pyridoxine 5'-phosphate + O2 = pyridoxal 5'-phosphate + H2O2. It functions in the pathway cofactor metabolism; pyridoxal 5'-phosphate salvage; pyridoxal 5'-phosphate from pyridoxamine 5'-phosphate: step 1/1. It participates in cofactor metabolism; pyridoxal 5'-phosphate salvage; pyridoxal 5'-phosphate from pyridoxine 5'-phosphate: step 1/1. Functionally, catalyzes the oxidation of either pyridoxine 5'-phosphate (PNP) or pyridoxamine 5'-phosphate (PMP) into pyridoxal 5'-phosphate (PLP). This chain is Pyridoxine/pyridoxamine 5'-phosphate oxidase, found in Vibrio cholerae serotype O1 (strain ATCC 39315 / El Tor Inaba N16961).